The sequence spans 420 residues: D-tagatose-1,6-bisphosphate aldolase subunit GatZ (420 aa).

This sequence belongs to the GatZ/KbaZ family. GatZ subfamily. In terms of assembly, forms a complex with GatY.

Its pathway is carbohydrate metabolism; D-tagatose 6-phosphate degradation; D-glyceraldehyde 3-phosphate and glycerone phosphate from D-tagatose 6-phosphate: step 2/2. Component of the tagatose-1,6-bisphosphate aldolase GatYZ that is required for full activity and stability of the Y subunit. Could have a chaperone-like function for the proper and stable folding of GatY. When expressed alone, GatZ does not show any aldolase activity. Is involved in the catabolism of galactitol. This is D-tagatose-1,6-bisphosphate aldolase subunit GatZ from Escherichia coli O6:K15:H31 (strain 536 / UPEC).